We begin with the raw amino-acid sequence, 249 residues long: MAPSRKFFVGGNWKMNGRKKNLGELITTLNAAKVPADTEVVCAPPTAYIDFARQKLDAKIAVAAQNCYKVTNGAFTGEISPGMIKDCGATWVVLGHSERRHVFGESDELIGQKVAHALAEGLGVIACIGEKLDEREAGITEKVVFEQTKVIADNVKDWSKVVLAYEPVWAIGTGKTATPQQAQEVHEKLRGWLKSNVSDAVAQSTRIIYGGSVTGATCKELASQPDVDGFLVGGASLKPEFVDIINAKQ.

Substrate-binding residues include N12 and K14. K14 bears the N6-acetyllysine mark. A 3'-nitrotyrosine modification is found at Y68. S80 is subject to Phosphoserine. H96 functions as the Electrophile in the catalytic mechanism. Residue S106 is modified to Phosphoserine. K142 is covalently cross-linked (Glycyl lysine isopeptide (Lys-Gly) (interchain with G-Cter in SUMO1)). K149 carries the N6-succinyllysine modification. The residue at position 156 (K156) is an N6-acetyllysine; alternate. K156 is modified (N6-succinyllysine; alternate). Residue S159 is modified to Phosphoserine. The Proton acceptor role is filled by E166. Phosphothreonine is present on T173. An N6-acetyllysine; alternate modification is found at K194. K194 is modified (N6-succinyllysine; alternate). K194 is modified (N6-methyllysine; alternate). S198 carries the phosphoserine modification. A 3'-nitrotyrosine modification is found at Y209. S212 is modified (phosphoserine). T214 is subject to Phosphothreonine. S223 is modified (phosphoserine). K238 bears the N6-acetyllysine mark.

It belongs to the triosephosphate isomerase family. In terms of assembly, homodimer.

Its subcellular location is the cytoplasm. It catalyses the reaction dihydroxyacetone phosphate = methylglyoxal + phosphate. The enzyme catalyses D-glyceraldehyde 3-phosphate = dihydroxyacetone phosphate. It functions in the pathway carbohydrate degradation; glycolysis; D-glyceraldehyde 3-phosphate from glycerone phosphate: step 1/1. Its pathway is carbohydrate biosynthesis; gluconeogenesis. Its function is as follows. Triosephosphate isomerase is an extremely efficient metabolic enzyme that catalyzes the interconversion between dihydroxyacetone phosphate (DHAP) and D-glyceraldehyde-3-phosphate (G3P) in glycolysis and gluconeogenesis. Functionally, it is also responsible for the non-negligible production of methylglyoxal a reactive cytotoxic side-product that modifies and can alter proteins, DNA and lipids. The polypeptide is Triosephosphate isomerase (TPI1) (Canis lupus familiaris (Dog)).